Reading from the N-terminus, the 63-residue chain is Large ribosomal subunit protein bL32 (63 aa).

Positions 1 to 23 are disordered; it reads MATPKAKVSKSRRDKRRAQFTAR. The segment covering 7–18 has biased composition (basic residues); the sequence is KVSKSRRDKRRA.

It belongs to the bacterial ribosomal protein bL32 family.

The chain is Large ribosomal subunit protein bL32 from Prosthecochloris aestuarii (strain DSM 271 / SK 413).